A 145-amino-acid polypeptide reads, in one-letter code: uncharacterized protein (145 aa).

To B.subtilis XkdJ.

This is an uncharacterized protein from Bacillus subtilis (strain 168).